A 655-amino-acid chain; its full sequence is p-hydroxybenzoic acid efflux pump subunit AaeB (655 aa).

At 1 to 12 the chain is on the periplasmic side; sequence MGIFSIANQHIR. The helical transmembrane segment at 13-33 threads the bilayer; it reads FAVKLATAIVLALFVGFHFQL. Over 34-37 the chain is Cytoplasmic; sequence ETPR. Residues 38 to 58 traverse the membrane as a helical segment; sequence WAVLTAAIVAAGTAFAAGGEP. The Periplasmic segment spans residues 59 to 68; the sequence is YSGAIRYRGF. Residues 69-89 traverse the membrane as a helical segment; it reads LRIIGTFIGCIAGLVIIIAMI. The Cytoplasmic portion of the chain corresponds to 90-92; that stretch reads RAP. The chain crosses the membrane as a helical span at residues 93–113; the sequence is LLMILVCCIWAGFCTWISSLV. Topologically, residues 114–120 are periplasmic; it reads RIENSYA. The chain crosses the membrane as a helical span at residues 121–141; it reads WGLAGYTALIIVITIQPEPLL. Residues 142-151 lie on the Cytoplasmic side of the membrane; sequence TPQFAVERCS. A helical transmembrane segment spans residues 152 to 172; it reads EIVIGIVCAIMADLLFSPRSI. The Periplasmic portion of the chain corresponds to 173–369; sequence KQEVDRELES…RTTLSCILGT (197 aa). A helical membrane pass occupies residues 370–390; the sequence is LFWLWTGWTSGSGAMVMIAVV. Residues 391–406 are Cytoplasmic-facing; that stretch reads TSLAMRLPNPRMVAID. The helical transmembrane segment at 407 to 427 threads the bilayer; it reads FIYGTLAALPLGLLYFLVIIP. The Periplasmic portion of the chain corresponds to 428-430; the sequence is NTQ. Residues 431–451 traverse the membrane as a helical segment; sequence QSMLLLCISLAVLGFFLGIEV. Topologically, residues 452–458 are cytoplasmic; the sequence is QKRRLGS. The helical transmembrane segment at 459 to 479 threads the bilayer; that stretch reads MGALASTINIIVLDNPMTFHF. The Periplasmic segment spans residues 480–481; it reads SQ. A helical membrane pass occupies residues 482 to 502; the sequence is FLDSALGQIVGCVLAFTVILL. At 503–655 the chain is on the cytoplasmic side; that stretch reads VRDKSRDRTG…HKYQHALTDS (153 aa).

Belongs to the aromatic acid exporter ArAE (TC 2.A.85) family.

It is found in the cell inner membrane. Its function is as follows. Forms an efflux pump with AaeA. Could function as a metabolic relief valve, allowing to eliminate certain compounds when they accumulate to high levels in the cell. Substrates are p-hydroxybenzoic acid (pHBA), 6-hydroxy-2-naphthoic and 2-hydroxycinnamate. In Escherichia coli (strain K12), this protein is p-hydroxybenzoic acid efflux pump subunit AaeB.